A 798-amino-acid chain; its full sequence is Peroxisome proliferator-activated receptor gamma coactivator 1-alpha (798 aa).

N6-acetyllysine is present on lysine 79. A disordered region spans residues 100 to 140 (PVDEDGLPSFDALTDGDVTTDNEASPSSMPDGTPPPQEAEE). Residues 116 to 129 (DVTTDNEASPSSMP) are compositionally biased toward polar residues. An LXXLL motif motif is present at residues 144–148 (LKKLL). Lysine 146 carries the post-translational modification N6-acetyllysine. Phosphothreonine; by AMPK is present on threonine 178. The residue at position 184 (lysine 184) is an N6-acetyllysine. The tract at residues 213-277 (YLTTNDDPPH…NDPKGSPFEN (65 aa)) is disordered. Residues 219-237 (DPPHTKPTENRNSSRDKCT) show a composition bias toward basic and acidic residues. An N6-acetyllysine mark is found at lysine 254, lysine 271, lysine 278, and lysine 321. The disordered stretch occupies residues 290–351 (GTAGLTPPTT…NNSTKKGPEQ (62 aa)). The interaction with PPARG stretch occupies residues 293–339 (GLTPPTTPPHKANQDNPFRASPKLKSSCKTVVPPPSKKPRYSESSGT). Positions 334–346 (SESSGTQGNNSTK) are enriched in polar residues. 4 positions are modified to N6-acetyllysine: lysine 347, lysine 413, lysine 442, and lysine 451. The tract at residues 350 to 798 (EQSELYAQLS…LKEAQRSLRR (449 aa)) is mediates interaction with RNF34. Residue serine 539 is modified to Phosphoserine; by AMPK. 3 disordered regions span residues 542–599 (SFNS…SSRS), 613–639 (HRNS…SYEE), and 650–669 (YRRE…ERQR). Over residues 563–578 (QRMRSRSRSFSRHRSC) the composition is skewed to basic residues. A compositionally biased stretch (low complexity) spans 579–599 (SRSPYSRSRSRSPGSRSSSRS). Basic residues predominate over residues 622-631 (SRSRSPYSRR). In terms of domain architecture, RRM spans 677–753 (RVIYVGKIRP…TDFELYFCGR (77 aa)). An N6-acetyllysine mark is found at lysine 758 and lysine 779.

As to quaternary structure, homooligomer. Interacts with MYBBP1A; inhibits MYBBP1A transcriptional activation. Interacts with PRDM16, LPIN1 and PML. Interacts (via LXXLL motif) with RORA and RORC (via AF-2 motif); activates RORA and RORC transcriptional activation. Interacts with LRPPRC. Interacts with FOXO1. Interacts with NR5A2. Post-translationally, phosphorylation by AMPK in skeletal muscle increases activation of its own promoter. Phosphorylated by CLK2. Heavily acetylated by KAT2A/GCN5 under conditions of high nutrients, leading to inactivation of PPARGC1A. Deacetylated by SIRT1 in low nutrients/high NAD conditions, leading to its activation. In terms of processing, ubiquitinated. Ubiquitination by RNF34 induces proteasomal degradation. Heart, skeletal muscle, liver and kidney. Expressed at lower levels in brain and pancreas and at very low levels in the intestine and white adipose tissue. In skeletal muscle, levels were lower in obese than in lean subjects and fasting induced a 2-fold increase in levels in the skeletal muscle in obese subjects.

Its subcellular location is the nucleus. The protein localises to the PML body. It localises to the cytoplasm. Functionally, transcriptional coactivator for steroid receptors and nuclear receptors. Greatly increases the transcriptional activity of PPARG and thyroid hormone receptor on the uncoupling protein promoter. Can regulate key mitochondrial genes that contribute to the program of adaptive thermogenesis. Plays an essential role in metabolic reprogramming in response to dietary availability through coordination of the expression of a wide array of genes involved in glucose and fatty acid metabolism. Acts as a key regulator of gluconeogenesis: stimulates hepatic gluconeogenesis by increasing the expression of gluconeogenic enzymes, and acting together with FOXO1 to promote the fasting gluconeogenic program. Induces the expression of PERM1 in the skeletal muscle in an ESRRA-dependent manner. Also involved in the integration of the circadian rhythms and energy metabolism. Required for oscillatory expression of clock genes, such as BMAL1 and NR1D1, through the coactivation of RORA and RORC, and metabolic genes, such as PDK4 and PEPCK. The sequence is that of Peroxisome proliferator-activated receptor gamma coactivator 1-alpha (PPARGC1A) from Homo sapiens (Human).